We begin with the raw amino-acid sequence, 381 residues long: 8-amino-7-oxononanoate synthase (381 aa).

Arginine 27 contacts substrate. 105–106 lines the pyridoxal 5'-phosphate pocket; the sequence is GY. Histidine 130 provides a ligand contact to substrate. Residues serine 176, 201–204, and 232–235 each bind pyridoxal 5'-phosphate; these read DEAH and TLSK. At lysine 235 the chain carries N6-(pyridoxal phosphate)lysine. Substrate is bound at residue threonine 345.

Belongs to the class-II pyridoxal-phosphate-dependent aminotransferase family. BioF subfamily. In terms of assembly, homodimer. Pyridoxal 5'-phosphate is required as a cofactor.

It carries out the reaction 6-carboxyhexanoyl-[ACP] + L-alanine + H(+) = (8S)-8-amino-7-oxononanoate + holo-[ACP] + CO2. Its pathway is cofactor biosynthesis; biotin biosynthesis. Catalyzes the decarboxylative condensation of pimeloyl-[acyl-carrier protein] and L-alanine to produce 8-amino-7-oxononanoate (AON), [acyl-carrier protein], and carbon dioxide. The polypeptide is 8-amino-7-oxononanoate synthase (Mycolicibacterium paratuberculosis (strain ATCC BAA-968 / K-10) (Mycobacterium paratuberculosis)).